The chain runs to 530 residues: Equilibrative nucleoside transporter 4 (530 aa).

The interval 1–21 is disordered; that stretch reads MGSVGSQRLEEPSVAGTPDPG. At 1–68 the chain is on the extracellular side; the sequence is MGSVGSQRLE…DEPVPDDRYH (68 aa). The chain crosses the membrane as a helical span at residues 69-89; that stretch reads AIYFAMLLAGVGFLLPYNSFI. The Cytoplasmic segment spans residues 90–101; the sequence is TDVDYLHHKYPG. The helical transmembrane segment at 102–122 threads the bilayer; sequence TSIVFDMSLTYILVALAAVLL. Over 123–139 the chain is Extracellular; sequence NNVLVERLTLHTRITAG. The chain crosses the membrane as a helical span at residues 140–160; that stretch reads YLLALGPLLFISICDVWLQLF. The Cytoplasmic portion of the chain corresponds to 161–166; sequence SRDQAY. A helical membrane pass occupies residues 167 to 187; sequence AINLAAVGTVAFGCTVQQSSF. Over 188 to 231 the chain is Extracellular; the sequence is YGYTGMLPKRYTQGVMTGESTAGVMISLSRILTKLLLPDERAST. A helical transmembrane segment spans residues 232 to 252; the sequence is LIFFLVSVALELLCFLLHLLV. Residues 253–351 are Cytoplasmic-facing; sequence RRSRFVLFYT…LLLHRYVVAR (99 aa). A helical transmembrane segment spans residues 352-372; it reads VIWADMLSIAVTYFITLCLFP. The Extracellular segment spans residues 373-381; the sequence is GLESEIRHC. Residues 382-402 form a helical membrane-spanning segment; sequence ILGEWLPILIMAVFNLSDFVG. The Cytoplasmic portion of the chain corresponds to 403–416; it reads KILAALPVDWRGTH. Residues 417 to 437 form a helical membrane-spanning segment; sequence LLACSCLRVVFIPLFILCVYP. Residues 438 to 450 lie on the Extracellular side of the membrane; sequence SGMPALRHPAWPC. Residues 451–471 traverse the membrane as a helical segment; the sequence is IFSLLMGISNGYFGSVPMILA. Residues 472-486 lie on the Cytoplasmic side of the membrane; sequence AGKVSPKQRELAGNT. The helical transmembrane segment at 487-509 threads the bilayer; that stretch reads MTVSYMSGLTLGSAVAYCTYSLT. At 510-530 the chain is on the extracellular side; the sequence is RDAHGSCLHASTANGSILAGL. N523 is a glycosylation site (N-linked (GlcNAc...) asparagine).

The protein belongs to the SLC29A/ENT transporter (TC 2.A.57) family. Post-translationally, N-glycosylated. Mainly expressed in brain and skeletal muscle. In brain, expressed in cerebellum, cerebral cortex, medulla oblongata, occipital pole, frontal and temporal lobes putamen, spinal cord, substancia nigra, hippocampus, caudate nucleus, nucleus accumbens, pons and choroid plexus. Expressed in heart, in both cardiomyocytes and vascular endothelial cells. Also expressed in adrenal gland, small intestine, pancreas, kidney, liver, bone marrow, lymph node. Located in endometrial stroma, where the expression is high in the proliferative phase, decreases during the secretory phase, and is no longer detectable in the menstrual phase.

Its subcellular location is the cell membrane. It localises to the apical cell membrane. It catalyses the reaction serotonin(out) = serotonin(in). The enzyme catalyses dopamine(out) = dopamine(in). The catalysed reaction is (R)-noradrenaline(out) = (R)-noradrenaline(in). It carries out the reaction (R)-adrenaline(out) = (R)-adrenaline(in). It catalyses the reaction histamine(out) = histamine(in). The enzyme catalyses tyramine(in) = tyramine(out). The catalysed reaction is guanidine(out) = guanidine(in). It carries out the reaction adenosine(in) = adenosine(out). With respect to regulation, activated at acidic pH. In terms of biological role, electrogenic voltage-dependent transporter that mediates the transport of a variety of endogenous bioactive amines, cationic xenobiotics and drugs. Utilizes the physiologic inside-negative membrane potential as a driving force to facilitate cellular uptake of organic cations. Functions as a Na(+)- and Cl(-)-independent bidirectional transporter. Substrate transport is pH-dependent and enhanced under acidic condition, which is most likely the result of allosteric changes in the transporter structure. Implicated in monoamine neurotransmitters uptake such as serotonin, dopamine, adrenaline/epinephrine, noradrenaline/norepinephrine, histamine and tyramine, thereby supporting a role in homeostatic regulation of aminergic neurotransmission in the central nervous system. Also responsible for the uptake of bioactive amines and drugs through the blood-cerebrospinal fluid (CSF) barrier, from the CSF into choroid plexus epithelial cells, thereby playing a significant role in the clearance of cationic neurotoxins, xenobiotics and metabolic waste in the brain. Involved in bidirectional transport of the purine nucleoside adenosine and plays a role in the regulation of extracellular adenosine concentrations in cardiac tissues, in particular during ischemia. May be involved in organic cation uptake from the tubular lumen into renal tubular cells, thereby contributing to organic cation reabsorption in the kidney. Also transports guanidine. In Homo sapiens (Human), this protein is Equilibrative nucleoside transporter 4.